Consider the following 598-residue polypeptide: Elongation factor 4 (598 aa).

The tr-type G domain occupies 2 to 184; sequence NNIRNFAIIA…AIVAKLPAPQ (183 aa). GTP contacts are provided by residues 14–19 and 131–134; these read DHGKST and NKVD.

This sequence belongs to the TRAFAC class translation factor GTPase superfamily. Classic translation factor GTPase family. LepA subfamily.

The protein localises to the cell membrane. The catalysed reaction is GTP + H2O = GDP + phosphate + H(+). Required for accurate and efficient protein synthesis under certain stress conditions. May act as a fidelity factor of the translation reaction, by catalyzing a one-codon backward translocation of tRNAs on improperly translocated ribosomes. Back-translocation proceeds from a post-translocation (POST) complex to a pre-translocation (PRE) complex, thus giving elongation factor G a second chance to translocate the tRNAs correctly. Binds to ribosomes in a GTP-dependent manner. The polypeptide is Elongation factor 4 (Wolbachia sp. subsp. Drosophila simulans (strain wRi)).